A 299-amino-acid polypeptide reads, in one-letter code: Coenzyme PQQ synthesis protein B (299 aa).

This sequence belongs to the PqqB family.

Its pathway is cofactor biosynthesis; pyrroloquinoline quinone biosynthesis. Functionally, may be involved in the transport of PQQ or its precursor to the periplasm. This is Coenzyme PQQ synthesis protein B from Xanthomonas euvesicatoria pv. vesicatoria (strain 85-10) (Xanthomonas campestris pv. vesicatoria).